Consider the following 238-residue polypeptide: UDP-2,3-diacylglucosamine hydrolase (238 aa).

Mn(2+)-binding residues include Asp8, His10, Asp41, Asn78, and His113. Position 78–79 (78–79) interacts with substrate; sequence NR. Substrate-binding residues include Asp121, Ser159, Asn163, Lys166, and His194. 2 residues coordinate Mn(2+): His194 and His196.

The protein belongs to the LpxH family. The cofactor is Mn(2+).

The protein resides in the cell inner membrane. It carries out the reaction UDP-2-N,3-O-bis[(3R)-3-hydroxytetradecanoyl]-alpha-D-glucosamine + H2O = 2-N,3-O-bis[(3R)-3-hydroxytetradecanoyl]-alpha-D-glucosaminyl 1-phosphate + UMP + 2 H(+). It functions in the pathway glycolipid biosynthesis; lipid IV(A) biosynthesis; lipid IV(A) from (3R)-3-hydroxytetradecanoyl-[acyl-carrier-protein] and UDP-N-acetyl-alpha-D-glucosamine: step 4/6. Functionally, hydrolyzes the pyrophosphate bond of UDP-2,3-diacylglucosamine to yield 2,3-diacylglucosamine 1-phosphate (lipid X) and UMP by catalyzing the attack of water at the alpha-P atom. Involved in the biosynthesis of lipid A, a phosphorylated glycolipid that anchors the lipopolysaccharide to the outer membrane of the cell. This Shewanella pealeana (strain ATCC 700345 / ANG-SQ1) protein is UDP-2,3-diacylglucosamine hydrolase.